The following is a 544-amino-acid chain: E3 ubiquitin-protein ligase makorin-3 (544 aa).

Disordered regions lie at residues 1–46 and 117–144; these read MEES…VSSA and DLSG…KMAT. 2 stretches are compositionally biased toward low complexity: residues 9-19 and 36-46; these read EAHAAAGAEAG and AAGASAGVSSA. 2 consecutive C3H1-type zinc fingers follow at residues 92–119 and 274–301; these read WTKQ…HDLS and PMPL…HGEI. The makorin-type Cys-His stretch occupies residues 302–329; that stretch reads CDMCGQQALHPWDAAQQEAHRRACVEAH. An RING-type zinc finger spans residues 347–401; it reads CGICMEVVYEKADPSDRRFGILFSCNHTYCLRCIRRWRSATQFENRISKSCPQCR. Residues 430-459 form a C3H1-type 3 zinc finger; it reads GMSQKACRYFAGGLGHCPFGEFCFYKHEYP.

As to expression, mainly expressed in mouse brain and reproductive system including testis and ovary. Ubiquitously detected at low levels throughout the entire embryo, but expression is highest in the ventricular layers of the brain.

It is found in the nucleus. The catalysed reaction is S-ubiquitinyl-[E2 ubiquitin-conjugating enzyme]-L-cysteine + [acceptor protein]-L-lysine = [E2 ubiquitin-conjugating enzyme]-L-cysteine + N(6)-ubiquitinyl-[acceptor protein]-L-lysine.. Its pathway is protein modification; protein ubiquitination. In terms of biological role, E3 ubiquitin ligase catalyzing the covalent attachment of ubiquitin moieties onto substrate proteins. Acts as a key developmental timer that helps ensure puberty begins at the appropriate age, by inhibiting premature activation of the reproductive hormone cascade. Epigenetically regulates GNRH1 transcription by disrupting the binding of methyl-DNA binding protein 3/MBD3 to the promoter of GNRH1. Mechanistically, mediates the non-proteolytic ubiquitination of MBD3 at multiple sites with 'Lys27' ubiquitin linkages and thereby regulates the methylation status of the genome, including GNRH1 promoter. Modulates the stability and translation of GNRH1 mRNA by mediating the non-proteolytic ubiquitination of PABP family members PABPC1, PABPC3 and PABPC4 at multiple sites. Also participates in the maintenance of genomic and epigenomic stability by regulating the abundance of APEX2 via 'Lys-48'-linked ubiquitination. This chain is E3 ubiquitin-protein ligase makorin-3 (Mkrn3), found in Mus musculus (Mouse).